The following is a 243-amino-acid chain: Terpene cyclase ptmB (243 aa).

Transmembrane regions (helical) follow at residues isoleucine 19–isoleucine 39, tyrosine 48–isoleucine 68, and glycine 78–alanine 98. N-linked (GlcNAc...) asparagine glycosylation occurs at asparagine 111. 4 helical membrane passes run leucine 112 to alanine 132, serine 137 to cysteine 157, leucine 172 to tryptophan 194, and leucine 205 to tryptophan 225.

Belongs to the paxB family.

Its subcellular location is the membrane. It functions in the pathway secondary metabolite biosynthesis. In terms of biological role, terpene cyclase; part of the gene cluster that mediates the biosynthesis of the indole diterpenes penitrems. The geranylgeranyl diphosphate (GGPP) synthase ptmG catalyzes the first step in penitrem biosynthesis via conversion of farnesyl pyrophosphate and isopentyl pyrophosphate into geranylgeranyl pyrophosphate (GGPP). Condensation of indole-3-glycerol phosphate with GGPP by the prenyl transferase ptmC then forms 3-geranylgeranylindole (3-GGI). Epoxidation by the FAD-dependent monooxygenase ptmM leads to a epoxidized-GGI that is substrate of the terpene cyclase ptmB for cyclization to yield paspaline. Paspaline is subsequently converted to 13-desoxypaxilline by the cytochrome P450 monooxygenase ptmP, the latter being then converted to paxilline by the cytochrome P450 monooxygenase ptmQ. Paxilline is converted to beta-paxitriol via C-10 ketoreduction by the short-chain dehydrogenase ptmH which can be monoprenylated at the C-20 by the indole diterpene prenyltransferase ptmD. A two-step elimination (acetylation and elimination) process performed by the O-acetyltransferase ptmV and ptmI leads to the production of the prenylated form of penijanthine. The FAD-linked oxidoreductase ptmO then converts the prenylated form of penijanthine into PC-M5 which is in turn transformed into PC-M4 by the aromatic dimethylallyltransferase ptmE. Five sequential oxidative transformations performed by the cytochrome P450 monooxygenases ptmK, ptmU, ptmL, ptmN and ptmJ yield the various penitrem compounds. PtmK, ptmU and ptmM are involved in the formation of the key bicyclic ring of penitrem C via the formation of the intermediates secopenitrem D and penitrem D. PtmL catalyzes the epoxidation of penitrem D and C to yield penitrem B and F, respectively. PtmJ catalyzes the last benzylic hydroxylation to convert penitrem B to prenitrem E and penitrem F to penitrem A. The protein is Terpene cyclase ptmB of Penicillium ochrochloron.